We begin with the raw amino-acid sequence, 197 residues long: Probable adenylyl-sulfate kinase (197 aa).

An ATP-binding site is contributed by G33 to S40. The active-site Phosphoserine intermediate is the S107.

This sequence belongs to the APS kinase family.

It catalyses the reaction adenosine 5'-phosphosulfate + ATP = 3'-phosphoadenylyl sulfate + ADP + H(+). The protein operates within sulfur metabolism; hydrogen sulfide biosynthesis; sulfite from sulfate: step 2/3. Catalyzes the synthesis of activated sulfate. The polypeptide is Probable adenylyl-sulfate kinase (cysC) (Bacillus subtilis (strain 168)).